A 185-amino-acid polypeptide reads, in one-letter code: Lectin B4 (185 aa).

A glycan (N-linked (GlcNAc...) asparagine) is linked at N48. 2 residues coordinate Mn(2+): E111 and D113. Residues D113, Y115, N117, and D120 each coordinate Ca(2+). D120 contacts Mn(2+). N-linked (GlcNAc...) asparagine glycosylation is present at N122. Residue H125 coordinates Mn(2+).

It belongs to the leguminous lectin family. In terms of assembly, homo- or heterotetramer. V.villosa isolectins are composed of either two subunits a and two subunits B (A2B2), four subunits A (A4), or four subunits B (B4). The predominant form, isolectin B4, has no A1 erythrocyte agglutinating activity.

N-acetyl-D-galactosamine specific lectin. Binds the Tn determinant (GalNAc-alpha-O-Ser/Thr) of the tumor-associated glycopeptide. Could be required for agglutinating cells such as Tn-exposed erythrocytes. This is Lectin B4 from Vicia villosa (Hairy vetch).